We begin with the raw amino-acid sequence, 157 residues long: Small ribosomal subunit protein bS16 (157 aa).

Over residues 125–141 (KRKAAKKAAEEAAAKEA) the composition is skewed to basic and acidic residues. Positions 125-157 (KRKAAKKAAEEAAAKEAEAEEAAEDKAEEESAE) are disordered. The span at 142-157 (EAEEAAEDKAEEESAE) shows a compositional bias: acidic residues.

Belongs to the bacterial ribosomal protein bS16 family.

This is Small ribosomal subunit protein bS16 from Corynebacterium kroppenstedtii (strain DSM 44385 / JCM 11950 / CIP 105744 / CCUG 35717).